Here is a 288-residue protein sequence, read N- to C-terminus: Diaminopimelate epimerase (288 aa).

2 residues coordinate substrate: asparagine 14 and asparagine 67. Cysteine 76 functions as the Proton donor in the catalytic mechanism. Residues 77-78 (GN), asparagine 166, asparagine 199, and 217-218 (ER) each bind substrate. The active-site Proton acceptor is cysteine 226. 227 to 228 (GT) contacts substrate.

It belongs to the diaminopimelate epimerase family. In terms of assembly, homodimer.

It localises to the cytoplasm. The catalysed reaction is (2S,6S)-2,6-diaminopimelate = meso-2,6-diaminopimelate. It participates in amino-acid biosynthesis; L-lysine biosynthesis via DAP pathway; DL-2,6-diaminopimelate from LL-2,6-diaminopimelate: step 1/1. Its function is as follows. Catalyzes the stereoinversion of LL-2,6-diaminopimelate (L,L-DAP) to meso-diaminopimelate (meso-DAP), a precursor of L-lysine and an essential component of the bacterial peptidoglycan. This chain is Diaminopimelate epimerase, found in Bacillus cereus (strain ATCC 10987 / NRS 248).